The sequence spans 291 residues: MTLTTSDKAAVLADALPWLTALNDKIVVVKYGGNAMTDDRLKAAFAADMVFLRNCGIHPVVVHGGGPQISAMLKKLGIAGDFKGGFRVTTPEVLDVARMVLFGQVGRELVNLINAYGPYAVGITGEDAHLFTAVRRTVMVDGVATDIGLVGDVERVNTDAVLDLIDAGRIPVVSTIAPDTDGLVYNINADTAAAALAEALSAEKLLMLTDVEGLYTRWPDRDSLVSQIDSDALAELLPTLEAGMVPKIEACLRAIDGGVPSAHVIDGRVEHCVLVELFTDEGAGTKVVQST.

Residues Gly-65–Gly-66, Arg-87, and Asn-186 contribute to the substrate site.

Belongs to the acetylglutamate kinase family. ArgB subfamily.

It localises to the cytoplasm. The enzyme catalyses N-acetyl-L-glutamate + ATP = N-acetyl-L-glutamyl 5-phosphate + ADP. It participates in amino-acid biosynthesis; L-arginine biosynthesis; N(2)-acetyl-L-ornithine from L-glutamate: step 2/4. Functionally, catalyzes the ATP-dependent phosphorylation of N-acetyl-L-glutamate. This is Acetylglutamate kinase from Mycolicibacterium vanbaalenii (strain DSM 7251 / JCM 13017 / BCRC 16820 / KCTC 9966 / NRRL B-24157 / PYR-1) (Mycobacterium vanbaalenii).